The chain runs to 167 residues: Small ribosomal subunit protein uS5 (167 aa).

An S5 DRBM domain is found at 12–75; that stretch reads IEDRVVAINR…ETARKSLIEV (64 aa).

This sequence belongs to the universal ribosomal protein uS5 family. In terms of assembly, part of the 30S ribosomal subunit. Contacts proteins S4 and S8.

With S4 and S12 plays an important role in translational accuracy. Its function is as follows. Located at the back of the 30S subunit body where it stabilizes the conformation of the head with respect to the body. The protein is Small ribosomal subunit protein uS5 of Pediococcus pentosaceus (strain ATCC 25745 / CCUG 21536 / LMG 10740 / 183-1w).